Consider the following 744-residue polypeptide: Potassium-transporting ATPase ATP-binding subunit (744 aa).

The next 4 helical transmembrane spans lie at P80–L100, A108–A128, L265–L285, and V310–I330. The active-site 4-aspartylphosphate intermediate is D363. ATP-binding positions include D400, E404, F435–S442, and K457. Positions 580 and 584 each coordinate Mg(2+). Transmembrane regions (helical) follow at residues F650–M670, A678–L698, and L724–V744.

Belongs to the cation transport ATPase (P-type) (TC 3.A.3) family. Type IA subfamily. In terms of assembly, the system is composed of three essential subunits: KdpA, KdpB and KdpC.

Its subcellular location is the cell inner membrane. The enzyme catalyses K(+)(out) + ATP + H2O = K(+)(in) + ADP + phosphate + H(+). In terms of biological role, part of the high-affinity ATP-driven potassium transport (or Kdp) system, which catalyzes the hydrolysis of ATP coupled with the electrogenic transport of potassium into the cytoplasm. This subunit is responsible for energy coupling to the transport system and for the release of the potassium ions to the cytoplasm. This is Potassium-transporting ATPase ATP-binding subunit from Ralstonia nicotianae (strain ATCC BAA-1114 / GMI1000) (Ralstonia solanacearum).